The chain runs to 696 residues: Probable glutamine--fructose-6-phosphate aminotransferase [isomerizing] (696 aa).

Cysteine 2 functions as the For GATase activity in the catalytic mechanism. One can recognise a Glutamine amidotransferase type-2 domain in the interval 2 to 303; it reads CGIFGYINYL…DDDIAHVRDG (302 aa). 2 consecutive SIS domains span residues 375 to 514 and 547 to 686; these read YYDI…DSVS and AIEQ…VDQP.

The enzyme catalyses D-fructose 6-phosphate + L-glutamine = D-glucosamine 6-phosphate + L-glutamate. Its pathway is nucleotide-sugar biosynthesis; UDP-N-acetyl-alpha-D-glucosamine biosynthesis; alpha-D-glucosamine 6-phosphate from D-fructose 6-phosphate: step 1/1. Functionally, involved in amino sugar synthesis (formation of chitin, supplies the amino sugars of asparagine-linked oligosaccharides of glycoproteins). This chain is Probable glutamine--fructose-6-phosphate aminotransferase [isomerizing], found in Schizosaccharomyces pombe (strain 972 / ATCC 24843) (Fission yeast).